The chain runs to 951 residues: Pentatricopeptide repeat-containing protein At4g19220, mitochondrial (951 aa).

A mitochondrion-targeting transit peptide spans 1-63 (MLLVMVRSST…RHFTSSVLSP (63 aa)). PPR repeat units follow at residues 121 to 151 (DLAT…LKEK), 152 to 186 (DVIV…GNEF), 187 to 221 (DSTT…GLVG), 222 to 252 (DSSL…MEHR), 253 to 287 (DIVS…GQEA), 288 to 322 (DTVT…GYSP), 325 to 355 (HVSV…LVCR), 356 to 386 (DVIS…MQSV), 392 to 426 (DIAT…EMQS), 428 to 458 (ALEV…TTHR), 459 to 489 (DLVS…VVSE), 496 to 530 (SLST…GFGD), 531 to 561 (NMLS…MSET), 563 to 597 (DLTS…GKIR), 599 to 629 (DLIT…AIKS), 634 to 668 (DTQL…NLCS), 669 to 695 (WNCV…LKLE), 697 to 731 (NEIT…GFQA), 732 to 762 (NPFV…SGVN), 763 to 793 (SISA…LSSN), 799 to 829 (NKSS…MEEK), and 835 to 865 (VTEH…IGEP). The interval 870 to 945 (VWGALLSACN…LPGYSVIDVR (76 aa)) is type E motif.

The protein belongs to the PPR family. PCMP-E subfamily.

The protein resides in the mitochondrion. The sequence is that of Pentatricopeptide repeat-containing protein At4g19220, mitochondrial (PCMP-E2) from Arabidopsis thaliana (Mouse-ear cress).